A 428-amino-acid chain; its full sequence is Flotillin-2 (428 aa).

Glycine 2 is lipidated: N-myristoyl glycine. Cysteine 4 carries S-palmitoyl cysteine; by ZDHHC5 lipidation. Cysteine 19 is lipidated: S-palmitoyl cysteine. The S-palmitoyl cysteine; by ZDHHC5 moiety is linked to residue cysteine 20. Position 405 is a phosphoserine (serine 405).

Belongs to the band 7/mec-2 family. Flotillin subfamily. In terms of assembly, heterooligomeric complex of flotillin-1 and flotillin-2 and caveolin-1 and caveolin-2. Interacts with ECPAS. ZDHHC5-catalyzed palmitoylation may be required for the formation of higher-order complexes and for neurite outgrowth in cultured neural stem cells.

It localises to the cell membrane. The protein resides in the membrane. The protein localises to the caveola. It is found in the endosome. May act as a scaffolding protein within caveolar membranes, functionally participating in formation of caveolae or caveolae-like vesicles. May be involved in epidermal cell adhesion and epidermal structure and function. This chain is Flotillin-2 (FLOT2), found in Bos taurus (Bovine).